The primary structure comprises 67 residues: Peptide Ctry2606 (67 aa).

A signal peptide spans 1–23 (MKTQTALFSFFLVLLLVATQTEG). Leucine amide is present on leucine 33. Positions 37–67 (ALRNQNFVDYAFDPSLSAADWRALETLLEEY) are excised as a propeptide.

This sequence belongs to the non-disulfide-bridged peptide (NDBP) superfamily. Short antimicrobial peptide (group 4) family. As to expression, expressed by the venom gland.

It localises to the secreted. Functionally, antimicrobial peptide. The polypeptide is Peptide Ctry2606 (Chaerilus tryznai (Scorpion)).